The sequence spans 158 residues: Nucleoside diphosphate kinase (158 aa).

ATP-binding residues include Lys16, Phe64, Arg92, Thr98, Arg109, and Asn119. His122 functions as the Pros-phosphohistidine intermediate in the catalytic mechanism.

It belongs to the NDK family. The cofactor is Mg(2+).

The protein resides in the cytoplasm. The enzyme catalyses a 2'-deoxyribonucleoside 5'-diphosphate + ATP = a 2'-deoxyribonucleoside 5'-triphosphate + ADP. It catalyses the reaction a ribonucleoside 5'-diphosphate + ATP = a ribonucleoside 5'-triphosphate + ADP. Its function is as follows. Major role in the synthesis of nucleoside triphosphates other than ATP. The ATP gamma phosphate is transferred to the NDP beta phosphate via a ping-pong mechanism, using a phosphorylated active-site intermediate. The sequence is that of Nucleoside diphosphate kinase from Haloquadratum walsbyi (strain DSM 16790 / HBSQ001).